We begin with the raw amino-acid sequence, 84 residues long: ATP synthase subunit c (84 aa).

A run of 2 helical transmembrane segments spans residues 9-29 (IIGA…GFAI) and 54-74 (IVAG…LLFI).

This sequence belongs to the ATPase C chain family. In terms of assembly, F-type ATPases have 2 components, F(1) - the catalytic core - and F(0) - the membrane proton channel. F(1) has five subunits: alpha(3), beta(3), gamma(1), delta(1), epsilon(1). F(0) has three main subunits: a(1), b(2) and c(10-14). The alpha and beta chains form an alternating ring which encloses part of the gamma chain. F(1) is attached to F(0) by a central stalk formed by the gamma and epsilon chains, while a peripheral stalk is formed by the delta and b chains.

It is found in the cell inner membrane. F(1)F(0) ATP synthase produces ATP from ADP in the presence of a proton or sodium gradient. F-type ATPases consist of two structural domains, F(1) containing the extramembraneous catalytic core and F(0) containing the membrane proton channel, linked together by a central stalk and a peripheral stalk. During catalysis, ATP synthesis in the catalytic domain of F(1) is coupled via a rotary mechanism of the central stalk subunits to proton translocation. Its function is as follows. Key component of the F(0) channel; it plays a direct role in translocation across the membrane. A homomeric c-ring of between 10-14 subunits forms the central stalk rotor element with the F(1) delta and epsilon subunits. The chain is ATP synthase subunit c from Glaesserella parasuis serovar 5 (strain SH0165) (Haemophilus parasuis).